A 438-amino-acid polypeptide reads, in one-letter code: Adenylosuccinate synthetase (438 aa).

GTP is bound by residues 12 to 18 (GDEGKGK) and 40 to 42 (GHT). Asp13 serves as the catalytic Proton acceptor. Mg(2+)-binding residues include Asp13 and Gly40. IMP is bound by residues 13 to 16 (DEGK), 38 to 41 (NAGH), Thr128, Arg142, Gln223, Thr238, and Arg302. Residue His41 is the Proton donor of the active site. Substrate is bound at residue 298-304 (TTTGRPR). Residues Arg304, 330 to 332 (KLD), and 412 to 414 (GVG) contribute to the GTP site.

It belongs to the adenylosuccinate synthetase family. Homodimer. Mg(2+) serves as cofactor.

The protein resides in the cytoplasm. The enzyme catalyses IMP + L-aspartate + GTP = N(6)-(1,2-dicarboxyethyl)-AMP + GDP + phosphate + 2 H(+). Its pathway is purine metabolism; AMP biosynthesis via de novo pathway; AMP from IMP: step 1/2. Plays an important role in the de novo pathway of purine nucleotide biosynthesis. Catalyzes the first committed step in the biosynthesis of AMP from IMP. In Leifsonia xyli subsp. xyli (strain CTCB07), this protein is Adenylosuccinate synthetase.